The sequence spans 487 residues: Malonate-semialdehyde dehydrogenase 3 (487 aa).

The NAD(+) site is built by Phe154, Lys178, Glu181, Arg182, and Ser231. Cys286 serves as the catalytic Nucleophile. An NAD(+)-binding site is contributed by Glu386.

The protein belongs to the aldehyde dehydrogenase family. IolA subfamily. As to quaternary structure, homotetramer.

The enzyme catalyses 3-oxopropanoate + NAD(+) + CoA + H2O = hydrogencarbonate + acetyl-CoA + NADH + H(+). It carries out the reaction 2-methyl-3-oxopropanoate + NAD(+) + CoA + H2O = propanoyl-CoA + hydrogencarbonate + NADH + H(+). It functions in the pathway polyol metabolism; myo-inositol degradation into acetyl-CoA; acetyl-CoA from myo-inositol: step 7/7. Catalyzes the oxidation of malonate semialdehyde (MSA) and methylmalonate semialdehyde (MMSA) into acetyl-CoA and propanoyl-CoA, respectively. Is involved in a myo-inositol catabolic pathway. Bicarbonate, and not CO2, is the end-product of the enzymatic reaction. This is Malonate-semialdehyde dehydrogenase 3 from Bacillus cereus (strain ZK / E33L).